Consider the following 239-residue polypeptide: Large ribosomal subunit protein uL2 (239 aa).

Disordered stretches follow at residues 1-20 (MGKS…FRSP) and 203-239 (PFGG…GRRK). Positions 222 to 239 (PPGRKVGHIAARRTGRRK) are enriched in basic residues.

The protein belongs to the universal ribosomal protein uL2 family. In terms of assembly, part of the 50S ribosomal subunit. Forms a bridge to the 30S subunit in the 70S ribosome.

One of the primary rRNA binding proteins. Required for association of the 30S and 50S subunits to form the 70S ribosome, for tRNA binding and peptide bond formation. It has been suggested to have peptidyltransferase activity; this is somewhat controversial. Makes several contacts with the 16S rRNA in the 70S ribosome. This chain is Large ribosomal subunit protein uL2, found in Pyrococcus horikoshii (strain ATCC 700860 / DSM 12428 / JCM 9974 / NBRC 100139 / OT-3).